A 395-amino-acid chain; its full sequence is Succinate--CoA ligase [ADP-forming] subunit beta (395 aa).

One can recognise an ATP-grasp domain in the interval 9 to 240; sequence RDVFEKHGVP…AASADPLEAK (232 aa). ATP is bound by residues K49, 56 to 58, A98, and E103; that span reads GRG. 2 residues coordinate Mg(2+): N195 and D209. Substrate-binding positions include N260 and 322-324; that span reads GIT.

This sequence belongs to the succinate/malate CoA ligase beta subunit family. Heterotetramer of two alpha and two beta subunits. It depends on Mg(2+) as a cofactor.

It catalyses the reaction succinate + ATP + CoA = succinyl-CoA + ADP + phosphate. The enzyme catalyses GTP + succinate + CoA = succinyl-CoA + GDP + phosphate. Its pathway is carbohydrate metabolism; tricarboxylic acid cycle; succinate from succinyl-CoA (ligase route): step 1/1. Succinyl-CoA synthetase functions in the citric acid cycle (TCA), coupling the hydrolysis of succinyl-CoA to the synthesis of either ATP or GTP and thus represents the only step of substrate-level phosphorylation in the TCA. The beta subunit provides nucleotide specificity of the enzyme and binds the substrate succinate, while the binding sites for coenzyme A and phosphate are found in the alpha subunit. The sequence is that of Succinate--CoA ligase [ADP-forming] subunit beta from Beutenbergia cavernae (strain ATCC BAA-8 / DSM 12333 / CCUG 43141 / JCM 11478 / NBRC 16432 / NCIMB 13614 / HKI 0122).